A 305-amino-acid polypeptide reads, in one-letter code: 3-methyl-2-oxobutanoate hydroxymethyltransferase (305 aa).

The Mg(2+) site is built by aspartate 52 and aspartate 95. 3-methyl-2-oxobutanoate is bound by residues 52-53 (DS), aspartate 95, and lysine 125. Residue glutamate 127 coordinates Mg(2+). The Proton acceptor role is filled by glutamate 194.

It belongs to the PanB family. As to quaternary structure, homodecamer; pentamer of dimers. The cofactor is Mg(2+).

It is found in the cytoplasm. The catalysed reaction is 3-methyl-2-oxobutanoate + (6R)-5,10-methylene-5,6,7,8-tetrahydrofolate + H2O = 2-dehydropantoate + (6S)-5,6,7,8-tetrahydrofolate. It functions in the pathway cofactor biosynthesis; (R)-pantothenate biosynthesis; (R)-pantoate from 3-methyl-2-oxobutanoate: step 1/2. In terms of biological role, catalyzes the reversible reaction in which hydroxymethyl group from 5,10-methylenetetrahydrofolate is transferred onto alpha-ketoisovalerate to form ketopantoate. The protein is 3-methyl-2-oxobutanoate hydroxymethyltransferase of Anaeromyxobacter sp. (strain Fw109-5).